A 546-amino-acid polypeptide reads, in one-letter code: Chaperonin GroEL 5 (546 aa).

Residues 30 to 33, lysine 51, 87 to 91, glycine 415, and aspartate 495 contribute to the ATP site; these read TLGP and DGTTT.

Belongs to the chaperonin (HSP60) family. As to quaternary structure, forms a cylinder of 14 subunits composed of two heptameric rings stacked back-to-back. Interacts with the co-chaperonin GroES.

It is found in the cytoplasm. It catalyses the reaction ATP + H2O + a folded polypeptide = ADP + phosphate + an unfolded polypeptide.. Functionally, together with its co-chaperonin GroES, plays an essential role in assisting protein folding. The GroEL-GroES system forms a nano-cage that allows encapsulation of the non-native substrate proteins and provides a physical environment optimized to promote and accelerate protein folding. The sequence is that of Chaperonin GroEL 5 from Paraburkholderia xenovorans (strain LB400).